The primary structure comprises 209 residues: Large ribosomal subunit protein uL3 (209 aa).

Gln150 carries the post-translational modification N5-methylglutamine.

The protein belongs to the universal ribosomal protein uL3 family. Part of the 50S ribosomal subunit. Forms a cluster with proteins L14 and L19. Post-translationally, methylated by PrmB.

Its function is as follows. One of the primary rRNA binding proteins, it binds directly near the 3'-end of the 23S rRNA, where it nucleates assembly of the 50S subunit. The polypeptide is Large ribosomal subunit protein uL3 (Vibrio cholerae serotype O1 (strain ATCC 39541 / Classical Ogawa 395 / O395)).